The primary structure comprises 91 residues: Cell division topological specificity factor (91 aa).

Belongs to the MinE family.

Its function is as follows. Prevents the cell division inhibition by proteins MinC and MinD at internal division sites while permitting inhibition at polar sites. This ensures cell division at the proper site by restricting the formation of a division septum at the midpoint of the long axis of the cell. The protein is Cell division topological specificity factor of Chloroflexus aurantiacus (strain ATCC 29366 / DSM 635 / J-10-fl).